The following is a 1704-amino-acid chain: MAVLRQLTLLLWKNYTLKKRKVLVTVLELFLPLLFSGILIWLRLKIQSENVPNATVYPDQSIQELPLFFSFPPPGGTWELAYVPSHSDAARTITETVKREFMIKMRVHGFSSEKDFEDYIRYDNHSSSVLAAVVFEHSFNHSQDPLPLAVKYHLRFSYTRRNYMWTQTGNIFLKETEGWHTTSLFPLFPSPGPREPSSPDGGEPGYIREGFLAMQHAVDKAIMRYHANTSAQQLFQKLMVITKRFPFPPYISDPFLIAIQYQLPLLLMLSFTYTSLTIIRAVVQEKEKKLKEYMRMMGLNSWLHWSAWFLMFFLFFLIVVSFMTLLFCVKVKKDIAVLSNSDPSLVLAFLLCFAISSISFSFMVSTFFSKANIAAAVGGFLYFFTYTPYFFVAPRYNWMTLSQKLLSCLLSNVAMAMGAQLIGKFEAKGTGIQWRDLLNPVNVDDNFCFGQVLGMLLLDSALYGLVTWYVEAVFPGQFGVPQPWHFFLMPSYWCGNPRTVVGKEEEGSDPEKALRNEYFEAEPEDLVAGIKIKHLSKVFQVGNKDKMGIRDLTLNLYEGQITVLLGHNGAGKTTTMSLLTGLFPPTSGHAYIHGYEISQDMAQIRKSLGLCPQHDVLFDNLTVAEHLYFYAQLKGLSLQKCPEEVKQMLHILSLEDKRDLRSKFLSGGMKRKLSIGIALIAGSKVLMLDEPTSGMDAVSRRAIWDLLQQQKSDRTVLLTTHFMDEADLLGDRIAILAKGELQCCGSSLFLKQKYGAGYHMTLVKEPHCNPEGISQLVHHHVPNAMLESHAGAELSFILPKESTHRFESLFAKLEKKQKELGIASFGASVTTMEEVFLRVGKLVDTSMDIQAIQLPALQYQHERRASDWALDSNLCGVMDPTNGIGALIEEEEVLVKLNTGLALHCQQFWAMFLKKAAYSWREWKMVAAQVLVPLTCLTLALLAIHYTSEIFDDPLLKLSLNEYGRTVVPFSVPGTSRLAQQLSENLRDMLQAERQEPREVLGDLEEFLVFRASVEGGGFNERCLVATSFKDRGELTVVTALFNNQAYHSPATALAIVDNLLFKLLCGPQASIEISNYPQPRNTLQVAKDHFNEGRKGFDIALNLLIAMAFLASTFSILAVSERAVQAKHVQFVSGVHVATFWFSALLWDLISFLVPSLLLLVVFQAFNVHAFTRDGHMADLLLLLMLYGWAIIPLMYLMSFFFSAASTAYTRLTIFNILSGIATFIMVTIMRIPAVKLEELSRTLDHVFLVLPNHCLGMAVSNFYENYETRRYCTSSELAAHYCKKYNIQYQESFYAWSTPGVGKFVTSMAASGGIYLTLLFLIETNLLWRLRTFICAFRRRWTLAELQNRTSVLPEDQDVAEERSRILVPSLDSMLDTPLIINELSKVYDQRAPLLAVDRISLAVQKGECFGLLGFNGAGKTTTFKMLTGEETITSGDAFVGGYSISSDIGKVRQRMGYCPQFDALLDHMTGREMLVMYARLRGIPERLINACVENTLRGLLLEPHANKLVKTYSGGNKRKLSTGIALIGEPAVIFLDEPSTGMDPVARRLLWDTVARARESGKAIVITSHSMEECEALCTRLAIMVQGQFKCLGSPQHLKSKFGSGYSLQAKVRSEGKQDALEEFKAFVDLTFPGSILEDEHQDMVHYHLPGCDLSWAKVFGILEKAKEKYGVDDYSVSQISLEQVFLSFAHLQPPTTEDGR.

Asn14 is a glycosylation site (N-linked (GlcNAc...) asparagine). The helical transmembrane segment at 22–42 (VLVTVLELFLPLLFSGILIWL) threads the bilayer. N-linked (GlcNAc...) asparagine glycans are attached at residues Asn53, Asn124, Asn140, and Asn228. The next 6 membrane-spanning stretches (helical) occupy residues 261-283 (YQLP…RAVV), 307-327 (AWFL…TLLF), 344-364 (SLVL…SFMV), 373-393 (IAAA…FFVA), 405-425 (LLSC…IGKF), and 447-467 (FCFG…GLVT). One can recognise an ABC transporter 1 domain in the interval 530–763 (IKIKHLSKVF…YGAGYHMTLV (234 aa)). 566 to 573 (GHNGAGKT) contacts ATP. The N-linked (GlcNAc...) asparagine glycan is linked to Asn620. Helical transmembrane passes span 925–945 (MVAA…LAIH), 1100–1120 (IALN…ILAV), 1144–1164 (SALL…LVVF), 1183–1203 (LLLM…SFFF), 1213–1233 (LTIF…IMRI), 1245–1265 (LDHV…SNFY), and 1310–1330 (MAAS…NLLW). The N-linked (GlcNAc...) asparagine glycan is linked to Asn1350. Positions 1381-1614 (LIINELSKVY…FGSGYSLQAK (234 aa)) constitute an ABC transporter 2 domain. ATP is bound at residue 1416–1423 (GFNGAGKT).

It belongs to the ABC transporter superfamily. ABCA family. In terms of assembly, homooligomer; disulfide-linked. Post-translationally, N-glycosylated. Localization at intracellular vesicles is accompanied by processing of oligosaccharide from high mannose type to complex type. N-linked glycosylation at Asn-124 and Asn-140 is required for stability and efficient anterograde trafficking and prevents from proteasomal degradation. Proteolytically cleaved by CTSL and to a lower extent by CTSB within multivesicular bodies (MVB) and lamellar bodies (LB) leading to a mature form of 150 kDa. Highly expressed in the lung and moderately expressed in the kidney, adipose, macrophage, and spleen.

The protein localises to the endosome. It localises to the multivesicular body membrane. Its subcellular location is the cytoplasmic vesicle membrane. It is found in the late endosome membrane. The protein resides in the lysosome membrane. It catalyses the reaction a 1,2-diacyl-sn-glycero-3-phospho-(1'-sn-glycerol)(in) + ATP + H2O = a 1,2-diacyl-sn-glycero-3-phospho-(1'-sn-glycerol)(out) + ADP + phosphate + H(+). The catalysed reaction is a 1,2-diacyl-sn-glycero-3-phosphocholine(in) + ATP + H2O = a 1,2-diacyl-sn-glycero-3-phosphocholine(out) + ADP + phosphate + H(+). The enzyme catalyses ATP + H2O + phospholipidSide 1 = ADP + phosphate + phospholipidSide 2.. It carries out the reaction ATP + H2O + xenobioticSide 1 = ADP + phosphate + xenobioticSide 2.. It catalyses the reaction 1,2-dihexadecanoyl-sn-glycero-3-phosphocholine(in) + ATP + H2O = 1,2-dihexadecanoyl-sn-glycero-3-phosphocholine(out) + ADP + phosphate + H(+). The catalysed reaction is cholesterol(in) + ATP + H2O = cholesterol(out) + ADP + phosphate + H(+). Functionally, catalyzes the ATP-dependent transport of phospholipids such as phosphatidylcholine and phosphoglycerol from the cytoplasm into the lumen side of lamellar bodies, in turn participates in the lamellar bodies biogenesis and homeostasis of pulmonary surfactant. Transports preferentially phosphatidylcholine containing short acyl chains. In addition plays a role as an efflux transporter of miltefosine across macrophage membranes and free cholesterol (FC) through intralumenal vesicles by removing FC from the cell as a component of surfactant and protects cells from free cholesterol toxicity. The chain is Phospholipid-transporting ATPase ABCA3 (Abca3) from Mus musculus (Mouse).